A 203-amino-acid polypeptide reads, in one-letter code: Cryptic neisserial protein 1 (203 aa).

An N-terminal signal peptide occupies residues 1 to 18 (MRRAILLILTLTVGTSLA).

The protein belongs to the Cnp family.

The protein localises to the periplasm. It is found in the cytoplasm. The protein is Cryptic neisserial protein 1 of Neisseria gonorrhoeae (strain ATCC 700825 / FA 1090).